A 99-amino-acid chain; its full sequence is Large ribosomal subunit protein bL28 (99 aa).

The protein belongs to the bacterial ribosomal protein bL28 family.

The polypeptide is Large ribosomal subunit protein bL28 (Brucella anthropi (strain ATCC 49188 / DSM 6882 / CCUG 24695 / JCM 21032 / LMG 3331 / NBRC 15819 / NCTC 12168 / Alc 37) (Ochrobactrum anthropi)).